The following is a 1135-amino-acid chain: LRR receptor-like serine/threonine-protein kinase RGI2 (1135 aa).

The N-terminal stretch at 1-35 is a signal peptide; the sequence is MSLQMPIPRKKALTVSHFSITLSLFLAFFISSTSA. At 36-723 the chain is on the extracellular side; it reads STNEVSALIS…QRGVHSHRLR (688 aa). An intrachain disulfide couples C69 to C76. Residues N101 and N117 are each glycosylated (N-linked (GlcNAc...) asparagine). LRR repeat units lie at residues 105 to 129, 130 to 153, 154 to 177, and 179 to 203; these read FTSLQKLVISNTNLTGAISSEIGDC, SELIVIDLSSNSLVGEIPSSLGKL, KNLQELCLNSNGLTGKIPPELGDC, and SLKNLEIFDNYLSENLPLELGKIST. Short sequence motifs (small peptide recognition) lie at residues 186 to 187, 208 to 211, 231 to 236, and Y259; these read FD, RAGG, and VLGLAA. LRR repeat units lie at residues 226–250, 251–274, 276–298, 299–323, 325–345, 346–370, 372–395, 397–418, 419–442, 444–466, 467–490, 491–514, 516–538, 539–562, 564–586, 587–610, 612–634, 635–658, and 659–683; these read CRNLKVLGLAATKISGSLPVSLGQL, SKLQSLSVYSTMLSGEIPKELGNC, ELINLFLYDNDLSGTLPKELGKL, QNLEKMLLWQNNLHGPIPEEIGFMK, LNAIDLSMNYFSGTIPKSFGN, LSNLQELMLSSNNITGSIPSILSNC, KLVQFQIDANQISGLIPPEIGLLK, LNIFLGWQNKLEGNIPDELAGC, QNLQALDLSQNYLTGSLPAGLFQL, NLTKLLLISNAISGVIPLEIGNC, TSLVRLRLVNNRITGEIPKGIGFL, QNLSFLDLSENNLSGPVPLEISNC, QLQMLNLSNNTLQGYLPLSLSSL, TKLQVLDVSSNDLTGKIPDSLGHL, SLNRLILSKNSFNGEIPSSLGHC, TNLQLLDLSSNNISGTIPEELFDI, DLDIALNLSWNSLDGFIPERISA, LNRLSVLDISHNMLSGDLSALSGL, and ENLVSLNISHNRFSGYLPDSKVFRQ. N273 carries N-linked (GlcNAc...) asparagine glycosylation. The short motif at 281 to 283 is the Small peptide recognition element; the sequence is FLY. The Small peptide recognition motif lies at 329-332; the sequence is DLSM. N-linked (GlcNAc...) asparagine glycosylation occurs at N345. The short motif at 351–353 is the Small peptide recognition element; the sequence is ELM. 2 N-linked (GlcNAc...) asparagine glycosylation sites follow: N358 and N369. 2 consecutive short sequence motifs (small peptide recognition) follow at residues 399–403 and 425–428; these read IFLGW and DLSQ. N444 carries N-linked (GlcNAc...) asparagine glycosylation. The short motif at 447 to 451 is the Small peptide recognition element; sequence KLLLI. Residue N465 is glycosylated (N-linked (GlcNAc...) asparagine). Residues 471 to 473 carry the Small peptide recognition motif; it reads RLR. N492, N502, N521, and N524 each carry an N-linked (GlcNAc...) asparagine glycan. 2 N-linked (GlcNAc...) asparagine glycosylation sites follow: N598 and N618. N-linked (GlcNAc...) asparagine glycans are attached at residues N665 and N707. A helical membrane pass occupies residues 724–744; sequence IAIGLLISVTAVLAVLGVLAV. Topologically, residues 745 to 1135 are cytoplasmic; it reads IRAKQMIRDD…ATSNVRPNLK (391 aa). Position 777 is a phosphothreonine (T777). Positions 785–1066 constitute a Protein kinase domain; that stretch reads LVEGNVIGKG…KDVAAMLSEI (282 aa). Residues 791-799 and K813 contribute to the ATP site; that span reads IGKGCSGIV. Phosphotyrosine is present on residues Y868 and Y907. D920 functions as the Proton acceptor in the catalytic mechanism. 2 positions are modified to phosphotyrosine: Y963 and Y970. The tract at residues 1077-1135 is disordered; the sequence is DGCSGSCNNGRERGKDDSTSSVMQQTAKYLRSSSTSFSASSLLYSSSSSATSNVRPNLK. Residues 1108–1128 are compositionally biased toward low complexity; that stretch reads SSSTSFSASSLLYSSSSSATS.

This sequence belongs to the protein kinase superfamily. Ser/Thr protein kinase family. Binds to RGF peptides such as RGF1, GLV5/CLEL1/RGF2, GLV7/CLEL3/RGF3, GLV3/RGF4, GLV10/CLEL7/RGF5 and RGF10/CLELN; these interactions trigger the formation of heterodimers with SERK1. Interacts with UBP13. In terms of processing, phosphorylated and ubiquitinated upon interaction with RGF1, thus leading to activation a subsequent degradation. Stabilized by UBP12 and UBP13-mediated deubiquitination. Post-translationally, autophosphorylated. As to expression, specific to root meristems, especially in lateral root meristems (LRM).

The protein localises to the membrane. It catalyses the reaction L-seryl-[protein] + ATP = O-phospho-L-seryl-[protein] + ADP + H(+). It carries out the reaction L-threonyl-[protein] + ATP = O-phospho-L-threonyl-[protein] + ADP + H(+). In terms of biological role, together with RGI1, RGI3, RGI4 and RGI5, acts as a receptor of RGF peptides (e.g. RGF1, GLV5/CLEL1/RGF2, GLV7/CLEL3/RGF3, GLV3/RGF4, GLV10/CLEL7/RGF5 and RGF10/CLELN), peptide hormones which maintain the postembryonic root stem cell niche by regulating the expression levels and patterns of the transcription factor PLETHORA (PLT, e.g. PLT1 and PLT2). Links RGF peptides signal with their downstream components. This Arabidopsis thaliana (Mouse-ear cress) protein is LRR receptor-like serine/threonine-protein kinase RGI2.